The primary structure comprises 446 residues: SPARC-related modular calcium-binding protein 2 (446 aa).

The N-terminal stretch at 1-21 is a signal peptide; that stretch reads MLLPQLCWLPLLAGLLPPVPA. The 53-residue stretch at 34-86 folds into the Kazal-like domain; the sequence is QDKDKDCSLDCAGSPQKPLCASDGRTFLSRCEFQRAKCKDPQLEIAYRGNCKD. 6 cysteine pairs are disulfide-bonded: C40/C71, C44/C64, C53/C84, C90/C113, C124/C131, and C133/C153. The 67-residue stretch at 87–153 folds into the Thyroglobulin type-1 1 domain; that stretch reads VSRCVAERKY…TAVAHKTPRC (67 aa). Positions 147–228 are disordered; that stretch reads AHKTPRCPGS…EHQSALEEAK (82 aa). Basic and acidic residues predominate over residues 161 to 172; that stretch reads LPQREGTGKTDD. N-linked (GlcNAc...) asparagine glycosylation occurs at N206. A compositionally biased stretch (polar residues) spans 206 to 216; it reads NKTNKNSVSSC. The 69-residue stretch at 213-281 folds into the Thyroglobulin type-1 2 domain; the sequence is VSSCDQEHQS…TSTRYEQPKC (69 aa). 3 disulfide bridges follow: C216–C240, C251–C258, and C260–C281. Basic and acidic residues predominate over residues 217–228; the sequence is DQEHQSALEEAK. EF-hand domains are found at residues 347-382 and 384-419; these read LEER…LRKK and KPKK…AKED. The Ca(2+) site is built by D360, N362, S364, D366, E371, D397, N399, D401, S403, and E408. An N-linked (GlcNAc...) asparagine glycan is attached at N362. Residues 416–446 are disordered; that stretch reads AKEDGKADTKKRHTPRGHAESTSNRQPRKQG.

In terms of assembly, binds various proteins from the extracellular matrix.

The protein localises to the secreted. The protein resides in the extracellular space. It localises to the extracellular matrix. It is found in the basement membrane. Functionally, promotes matrix assembly and cell adhesiveness. Can stimulate endothelial cell proliferation, migration, as well as angiogenesis. The sequence is that of SPARC-related modular calcium-binding protein 2 (SMOC2) from Homo sapiens (Human).